The following is a 43-amino-acid chain: Protein PsbN (43 aa).

Residues 4–24 (AIVLIISVGAALVAVTGYGIY) form a helical membrane-spanning segment.

The protein belongs to the PsbN family.

It localises to the cellular thylakoid membrane. In terms of biological role, may play a role in photosystem I and II biogenesis. The polypeptide is Protein PsbN (Trichormus variabilis (strain ATCC 29413 / PCC 7937) (Anabaena variabilis)).